Here is a 256-residue protein sequence, read N- to C-terminus: MISAQNLVYSLQGRRLTDNVSLTFPGGEIVAILGPNGAGKSTLLRQLTGYLQPDSGECRLFNKPLNEWSITELAKHRAVMRQNSHMAFPFSVQEVIQMGRHPHRTGNQDNETAQIMALCDCQALANRDYRQLSGGEQQRVQLARLLVQLWEPTPSPKWLFLDEPTSALDIHHQQHLFRLLRQLVHERQFNVCCVLHDLNLAARYADRIVLMQKGKVIANGKPQDVLTQQELTMLYGADITVLEDPANHSPLIVLDH.

One can recognise an ABC transporter domain in the interval I2–D238. G34–S41 is an ATP binding site.

It belongs to the ABC transporter superfamily. Heme (hemin) importer (TC 3.A.1.14.5) family. As to quaternary structure, the complex is composed of two ATP-binding proteins (HmuV), two transmembrane proteins (HmuU) and a solute-binding protein (HmuT).

Its subcellular location is the cell inner membrane. Its function is as follows. Part of the ABC transporter complex HmuTUV involved in hemin import. Responsible for energy coupling to the transport system. The protein is Hemin import ATP-binding protein HmuV of Shigella dysenteriae.